We begin with the raw amino-acid sequence, 209 residues long: Kynurenine formamidase (209 aa).

Trp20 serves as a coordination point for substrate. Residues His50, His54, and Asp56 each contribute to the Zn(2+) site. Residue His60 is the Proton donor/acceptor of the active site. His161 and Glu173 together coordinate Zn(2+).

The protein belongs to the Cyclase 1 superfamily. KynB family. Homodimer. It depends on Zn(2+) as a cofactor.

It carries out the reaction N-formyl-L-kynurenine + H2O = L-kynurenine + formate + H(+). It participates in amino-acid degradation; L-tryptophan degradation via kynurenine pathway; L-kynurenine from L-tryptophan: step 2/2. In terms of biological role, catalyzes the hydrolysis of N-formyl-L-kynurenine to L-kynurenine, the second step in the kynurenine pathway of tryptophan degradation. In Bacillus cereus (strain ATCC 14579 / DSM 31 / CCUG 7414 / JCM 2152 / NBRC 15305 / NCIMB 9373 / NCTC 2599 / NRRL B-3711), this protein is Kynurenine formamidase.